Consider the following 246-residue polypeptide: uncharacterized protein (246 aa).

2 disordered regions span residues 9–125 (CSRV…GAMA) and 155–203 (QPVR…EEKA). Basic residues predominate over residues 27 to 37 (GTRRQRQRPRQ). Pro residues-rich tracts occupy residues 54–64 (PRPPTGPPARY) and 101–117 (EPRP…PPGS). The span at 161 to 176 (KLPKGKGRLRRPRQSR) shows a compositional bias: basic residues. Phosphothreonine is present on T179. A phosphoserine mark is found at S196, S210, and S220.

The protein localises to the cytoplasm. This is an uncharacterized protein from Mus musculus (Mouse).